Reading from the N-terminus, the 363-residue chain is Phospho-N-acetylmuramoyl-pentapeptide-transferase (363 aa).

The next 10 helical transmembrane spans lie at 33–53 (YAVLMGIALYAGFFFTYGVLP), 82–102 (GVIFVSVFVLLVYLLMRPSFV), 105–125 (LILLLTWGVMLTGYLDDCAQV), 133–153 (GALDFLFAVLTAALLGHFYFH), 166–186 (PVFVSPFLFFAGSVVILWMSI), 198–218 (LSGALVLMALLSMGTIFYFLL), 227–247 (LLVPFVVDGAQWALMSFALAG), 271–291 (ALGFFIGVLVLISGNPFLLLM), 295–315 (VILVNGGTGLLKVVLLRFFHV), and 340–360 (VLLRFMILQGLLTIGLLGVLF).

Belongs to the glycosyltransferase 4 family. MraY subfamily. The cofactor is Mg(2+).

It localises to the cell inner membrane. The catalysed reaction is UDP-N-acetyl-alpha-D-muramoyl-L-alanyl-gamma-D-glutamyl-meso-2,6-diaminopimeloyl-D-alanyl-D-alanine + di-trans,octa-cis-undecaprenyl phosphate = di-trans,octa-cis-undecaprenyl diphospho-N-acetyl-alpha-D-muramoyl-L-alanyl-D-glutamyl-meso-2,6-diaminopimeloyl-D-alanyl-D-alanine + UMP. The protein operates within cell wall biogenesis; peptidoglycan biosynthesis. Functionally, catalyzes the initial step of the lipid cycle reactions in the biosynthesis of the cell wall peptidoglycan: transfers peptidoglycan precursor phospho-MurNAc-pentapeptide from UDP-MurNAc-pentapeptide onto the lipid carrier undecaprenyl phosphate, yielding undecaprenyl-pyrophosphoryl-MurNAc-pentapeptide, known as lipid I. The chain is Phospho-N-acetylmuramoyl-pentapeptide-transferase from Treponema pallidum (strain Nichols).